The primary structure comprises 361 residues: [LysW]-lysine hydrolase (361 aa).

His-67 is a binding site for Zn(2+). Asp-69 is an active-site residue. Asp-91 provides a ligand contact to Zn(2+). Glu-124 serves as the catalytic Proton acceptor. Zn(2+)-binding residues include Glu-125, Glu-148, and His-326.

This sequence belongs to the peptidase M20A family. LysK subfamily. Homotetramer and homooctamer. Zn(2+) serves as cofactor. It depends on Co(2+) as a cofactor.

It is found in the cytoplasm. The catalysed reaction is [amino-group carrier protein]-C-terminal-gamma-(L-lysyl)-L-glutamate + H2O = [amino-group carrier protein]-C-terminal-L-glutamate + L-lysine. Its pathway is amino-acid biosynthesis; L-lysine biosynthesis via AAA pathway; L-lysine from L-alpha-aminoadipate (Thermus route): step 5/5. Its function is as follows. Catalyzes the release of L-lysine from [LysW]-gamma-L-lysine. In vitro, can deacetylate both N(2)-acetyl-L-lysine and N(2)-acetyl-L-ornithine. The polypeptide is [LysW]-lysine hydrolase (Thermus thermophilus (strain ATCC BAA-163 / DSM 7039 / HB27)).